The primary structure comprises 378 residues: MSHVDDGFRSLTLKRFPQTDDVNPLLAWEAADEYLLQQLDETEIRGPVLILNDTFGALSCALAEHSPYSIGDSYLSELGTRENLRHNGIAESSVMFLDSTADYPQAPGVVLIKVPKTLALLEQQLRALRKVVTAQTRIIAGAKARDIHTSTLELFEKVLGPTTTTLAWKKARLINCTFSNPQLADAPQTLSWKLEDTGWTIHNHANVFSRTGLDIGARFFMQHLPENLEGEIVDLGCGNGVIGLSLLAKNPQANVVFVDESPMAVDSSRLNVETNMPEAFERCEFMINNALSGVEPYRFNAVFCNPPFHQKHALTDNIAWEMFHHARRCLKINGELYIVANRHLDYFHKLKKIFGNCATIATNNKFVILKAVKPGRRR.

This sequence belongs to the methyltransferase superfamily. RlmG family.

It is found in the cytoplasm. The enzyme catalyses guanosine(1835) in 23S rRNA + S-adenosyl-L-methionine = N(2)-methylguanosine(1835) in 23S rRNA + S-adenosyl-L-homocysteine + H(+). Specifically methylates the guanine in position 1835 (m2G1835) of 23S rRNA. In Salmonella arizonae (strain ATCC BAA-731 / CDC346-86 / RSK2980), this protein is Ribosomal RNA large subunit methyltransferase G.